Here is a 316-residue protein sequence, read N- to C-terminus: N-acetylmuramic acid 6-phosphate etherase (316 aa).

The SIS domain maps to 66-229 (IVAAIGRGGR…STASMIRLGK (164 aa)). The active-site Proton donor is the Glu-94. Glu-125 is a catalytic residue.

It belongs to the GCKR-like family. MurNAc-6-P etherase subfamily. As to quaternary structure, homodimer.

The enzyme catalyses N-acetyl-D-muramate 6-phosphate + H2O = N-acetyl-D-glucosamine 6-phosphate + (R)-lactate. It functions in the pathway amino-sugar metabolism; 1,6-anhydro-N-acetylmuramate degradation. It participates in amino-sugar metabolism; N-acetylmuramate degradation. Its pathway is cell wall biogenesis; peptidoglycan recycling. Its function is as follows. Specifically catalyzes the cleavage of the D-lactyl ether substituent of MurNAc 6-phosphate, producing GlcNAc 6-phosphate and D-lactate. Together with AnmK, is also required for the utilization of anhydro-N-acetylmuramic acid (anhMurNAc) either imported from the medium or derived from its own cell wall murein, and thus plays a role in cell wall recycling. The polypeptide is N-acetylmuramic acid 6-phosphate etherase (Jannaschia sp. (strain CCS1)).